Reading from the N-terminus, the 173-residue chain is RNA pyrophosphohydrolase (173 aa).

The 144-residue stretch at G6 to R149 folds into the Nudix hydrolase domain. A Nudix box motif is present at residues G38 to G59.

The protein belongs to the Nudix hydrolase family. RppH subfamily. A divalent metal cation is required as a cofactor.

In terms of biological role, accelerates the degradation of transcripts by removing pyrophosphate from the 5'-end of triphosphorylated RNA, leading to a more labile monophosphorylated state that can stimulate subsequent ribonuclease cleavage. The protein is RNA pyrophosphohydrolase of Psychrobacter sp. (strain PRwf-1).